The sequence spans 123 residues: Succinate dehydrogenase assembly factor 3, mitochondrial (123 aa).

Residues 1-31 constitute a mitochondrion transit peptide; sequence MANPAHISAVRTLYKKILVLHRFLPIDLRAL.

It belongs to the complex I LYR family. SDHAF3 subfamily. As to quaternary structure, interacts with sdhb within an sdha-sdhb subcomplex.

The protein localises to the mitochondrion matrix. Its function is as follows. Plays an essential role in the assembly of succinate dehydrogenase (SDH), an enzyme complex (also referred to as respiratory complex II) that is a component of both the tricarboxylic acid (TCA) cycle and the mitochondrial electron transport chain, and which couples the oxidation of succinate to fumarate with the reduction of ubiquinone (coenzyme Q) to ubiquinol. Promotes maturation of the iron-sulfur protein subunit sdhb of the SDH catalytic dimer, protecting it from the deleterious effects of oxidants. May act together with SDHAF1. The polypeptide is Succinate dehydrogenase assembly factor 3, mitochondrial (Danio rerio (Zebrafish)).